Reading from the N-terminus, the 499-residue chain is Protein nucleotidyltransferase YdiU (499 aa).

The ATP site is built by Gly95, Gly97, Arg98, Lys117, Asp129, Gly130, Arg180, and Arg187. Catalysis depends on Asp256, which acts as the Proton acceptor. Mg(2+) is bound by residues Asn257 and Asp266. Asp266 serves as a coordination point for ATP.

The protein belongs to the SELO family. The cofactor is Mg(2+). It depends on Mn(2+) as a cofactor.

It catalyses the reaction L-seryl-[protein] + ATP = 3-O-(5'-adenylyl)-L-seryl-[protein] + diphosphate. The enzyme catalyses L-threonyl-[protein] + ATP = 3-O-(5'-adenylyl)-L-threonyl-[protein] + diphosphate. It carries out the reaction L-tyrosyl-[protein] + ATP = O-(5'-adenylyl)-L-tyrosyl-[protein] + diphosphate. The catalysed reaction is L-histidyl-[protein] + UTP = N(tele)-(5'-uridylyl)-L-histidyl-[protein] + diphosphate. It catalyses the reaction L-seryl-[protein] + UTP = O-(5'-uridylyl)-L-seryl-[protein] + diphosphate. The enzyme catalyses L-tyrosyl-[protein] + UTP = O-(5'-uridylyl)-L-tyrosyl-[protein] + diphosphate. Its function is as follows. Nucleotidyltransferase involved in the post-translational modification of proteins. It can catalyze the addition of adenosine monophosphate (AMP) or uridine monophosphate (UMP) to a protein, resulting in modifications known as AMPylation and UMPylation. This chain is Protein nucleotidyltransferase YdiU, found in Dechloromonas aromatica (strain RCB).